A 146-amino-acid chain; its full sequence is Gene 19.2 protein (146 aa).

The polypeptide is Gene 19.2 protein (19.2) (Escherichia coli (Bacteriophage T3)).